Reading from the N-terminus, the 155-residue chain is Transcription antitermination protein NusB (155 aa).

This sequence belongs to the NusB family.

Functionally, involved in transcription antitermination. Required for transcription of ribosomal RNA (rRNA) genes. Binds specifically to the boxA antiterminator sequence of the ribosomal RNA (rrn) operons. The sequence is that of Transcription antitermination protein NusB from Vibrio vulnificus (strain CMCP6).